Consider the following 167-residue polypeptide: Small ribosomal subunit protein uS5 (167 aa).

One can recognise an S5 DRBM domain in the interval 12–75 (LNEKLIAVNR…EKARRNIRDV (64 aa)).

This sequence belongs to the universal ribosomal protein uS5 family. Part of the 30S ribosomal subunit. Contacts proteins S4 and S8.

Its function is as follows. With S4 and S12 plays an important role in translational accuracy. Functionally, located at the back of the 30S subunit body where it stabilizes the conformation of the head with respect to the body. The sequence is that of Small ribosomal subunit protein uS5 from Psychromonas ingrahamii (strain DSM 17664 / CCUG 51855 / 37).